A 362-amino-acid chain; its full sequence is Phosphatidylserine decarboxylase proenzyme (362 aa).

The helical transmembrane segment at 26-44 (YLLTGVTILSFIFMFQYKY) threads the bilayer. Residues Asp-147, His-206, and Ser-316 each act as charge relay system; for autoendoproteolytic cleavage activity in the active site. Ser-316 functions as the Schiff-base intermediate with substrate; via pyruvic acid; for decarboxylase activity in the catalytic mechanism. Position 316 is a pyruvic acid (Ser); by autocatalysis (Ser-316).

Belongs to the phosphatidylserine decarboxylase family. PSD-B subfamily. Eukaryotic type I sub-subfamily. In terms of assembly, heterodimer of a large membrane-associated beta subunit and a small pyruvoyl-containing alpha subunit. Pyruvate is required as a cofactor. In terms of processing, is synthesized initially as an inactive proenzyme. Formation of the active enzyme involves a self-maturation process in which the active site pyruvoyl group is generated from an internal serine residue via an autocatalytic post-translational modification. Two non-identical subunits are generated from the proenzyme in this reaction, and the pyruvate is formed at the N-terminus of the alpha chain, which is derived from the carboxyl end of the proenzyme. The autoendoproteolytic cleavage occurs by a canonical serine protease mechanism, in which the side chain hydroxyl group of the serine supplies its oxygen atom to form the C-terminus of the beta chain, while the remainder of the serine residue undergoes an oxidative deamination to produce ammonia and the pyruvoyl prosthetic group on the alpha chain. During this reaction, the Ser that is part of the protease active site of the proenzyme becomes the pyruvoyl prosthetic group, which constitutes an essential element of the active site of the mature decarboxylase.

The protein resides in the endoplasmic reticulum membrane. The catalysed reaction is a 1,2-diacyl-sn-glycero-3-phospho-L-serine + H(+) = a 1,2-diacyl-sn-glycero-3-phosphoethanolamine + CO2. It participates in phospholipid metabolism; phosphatidylethanolamine biosynthesis; phosphatidylethanolamine from CDP-diacylglycerol: step 2/2. Catalyzes the formation of phosphatidylethanolamine (PtdEtn) from phosphatidylserine (PtdSer). Plays a central role in phospholipid metabolism and in the interorganelle trafficking of phosphatidylserine. In Plasmodium falciparum, this protein is Phosphatidylserine decarboxylase proenzyme.